A 483-amino-acid chain; its full sequence is Altronate oxidoreductase (483 aa).

18 to 29 (IIQFGEGNFLRA) is an NAD(+) binding site.

The protein belongs to the mannitol dehydrogenase family. UxaB subfamily.

It catalyses the reaction D-altronate + NAD(+) = keto-D-tagaturonate + NADH + H(+). Its pathway is carbohydrate metabolism; pentose and glucuronate interconversion. This chain is Altronate oxidoreductase, found in Escherichia coli O17:K52:H18 (strain UMN026 / ExPEC).